The following is a 245-amino-acid chain: Dehydrogenase/reductase SDR family member 6 (245 aa).

NAD(+)-binding positions include 16 to 18, Asp37, and Asp58; that span reads QGI. Arg144 serves as a coordination point for substrate. Tyr147 (proton acceptor) is an active-site residue. Residues Lys151 and 180–184 each bind NAD(+); that span reads VDTPS. Substrate is bound by residues Arg188 and Arg205.

This sequence belongs to the short-chain dehydrogenases/reductases (SDR) family. Homotetramer.

Its subcellular location is the cytoplasm. It carries out the reaction cis-4-hydroxy-L-proline + NAD(+) = 4-oxo-L-proline + NADH + H(+). The catalysed reaction is (R)-3-hydroxybutanoate + NAD(+) = acetoacetate + NADH + H(+). It functions in the pathway amino-acid metabolism. Its pathway is siderophore biosynthesis. Its function is as follows. NAD(H)-dependent dehydrogenase/reductase with a preference for cyclic substrates. Catalyzes stereoselective conversion of 4-oxo-L-proline to cis-4-hydroxy-L-proline, likely a detoxification mechanism for ketoprolines. Mediates the formation of 2,5-dihydroxybenzoate (2,5-DHBA), a siderophore that chelates free cytoplasmic iron and associates with LCN2, thereby regulating iron transport and homeostasis while protecting cells against free radical-induced oxidative stress. The iron-siderophore complex is imported into mitochondria, providing an iron source for mitochondrial metabolic processes in particular heme synthesis. May act as a 3-hydroxybutyrate dehydrogenase. This is Dehydrogenase/reductase SDR family member 6 from Rattus norvegicus (Rat).